An 816-amino-acid polypeptide reads, in one-letter code: Phosphatidylinositol 4-kinase beta (816 aa).

Disordered stretches follow at residues 1–30 (MGDTVVEPAPLKPTSEPTSGPPGNNGGSLL), 101–120 (EDEMGATVASGTAKGARRRR), and 248–318 (AHRK…SFSS). Gly2 is subject to N-acetylglycine. Residues 2–68 (GDTVVEPAPL…VKLLHGGMAV (67 aa)) are interaction with ACBD3. The PIK helical domain occupies 52–242 (CQDVLEKVKL…GTKLRKLILS (191 aa)). Phosphoserine is present on Ser258. At Thr263 the chain carries Phosphothreonine. Phosphoserine is present on residues Ser266, Ser275, Ser277, Ser284, and Ser294. Composition is skewed to polar residues over residues 278 to 297 (DATASISLSSNLKRTASNPK) and 306 to 318 (SSSTESIDNSFSS). Ser428 carries the post-translational modification Phosphoserine. Thr438 bears the Phosphothreonine mark. At Ser511 the chain carries Phosphoserine. Thr517 and Thr519 each carry phosphothreonine. The region spanning 535 to 801 (EPWQEKVRRI…MVDGSMRSIT (267 aa)) is the PI3K/PI4K catalytic domain. Residues 541–547 (VRRIREG) form a G-loop region. Residues 668–676 (QVKDRHNGN) are catalytic loop. The segment at 687–711 (HIDFGFILSSSPRNLGFETSAFKLT) is activation loop.

It belongs to the PI3/PI4-kinase family. Type III PI4K subfamily. In terms of assembly, interacts with ARF1 and ARF3 in the Golgi complex, but not with ARF4, ARF5 or ARF6. Interacts with NCS1/FREQ in a calcium-independent manner. Interacts with CALN1/CABP8 and CALN2/CABP7; in a calcium-dependent manner; this interaction competes with NCS1/FREQ binding. Interacts with ACBD3. Interacts with ARMH3, YWHAB, YWHAE, YWHAG, YWHAH, YWHAQ, YWHAZ and SFN. Interacts with GGA2 (via VHS domain); the interaction is important for PI4KB location at the Golgi apparatus membrane. Interacts with ATG9A. It depends on Mg(2+) as a cofactor. Mn(2+) serves as cofactor.

It is found in the endomembrane system. The protein localises to the mitochondrion outer membrane. It localises to the rough endoplasmic reticulum membrane. The protein resides in the golgi apparatus. Its subcellular location is the golgi apparatus membrane. The catalysed reaction is a 1,2-diacyl-sn-glycero-3-phospho-(1D-myo-inositol) + ATP = a 1,2-diacyl-sn-glycero-3-phospho-(1D-myo-inositol 4-phosphate) + ADP + H(+). Inhibited by wortmannin. Increased kinase activity upon interaction with NCS1/FREQ. Phosphorylates phosphatidylinositol (PI) in the first committed step in the production of the second messenger inositol-1,4,5,-trisphosphate (PIP). May regulate Golgi disintegration/reorganization during mitosis, possibly via its phosphorylation. Involved in Golgi-to-plasma membrane trafficking. This chain is Phosphatidylinositol 4-kinase beta (PI4KB), found in Plecturocebus moloch (Dusky titi monkey).